The sequence spans 143 residues: uncharacterized protein (143 aa).

A run of 4 helical transmembrane segments spans residues 7-29, 52-74, 87-105, and 120-142; these read LFLF…LSLV, FSLY…NTYL, LGVF…LWAG, and WLGI…IRLG.

The protein localises to the cell membrane. This is an uncharacterized protein from Aquifex aeolicus (strain VF5).